A 139-amino-acid chain; its full sequence is uncharacterized protein (139 aa).

The 55-residue stretch at 19-73 folds into the HTH cro/C1-type domain; that stretch reads IRLRRTMLGMSQEKLGESLGITFQQIQKYEKGTNRVGASRLQNISQILNVPVSFF. A DNA-binding region (H-T-H motif) is located at residues 30–49; that stretch reads QEKLGESLGITFQQIQKYEK.

This is an uncharacterized protein from Rhizobium meliloti (strain 1021) (Ensifer meliloti).